A 596-amino-acid polypeptide reads, in one-letter code: Deuterosome assembly protein 1 (596 aa).

Coiled-coil stretches lie at residues 8 to 68 (IARN…NHEI), 130 to 180 (CELQ…FQKE), and 227 to 284 (IENL…DLLR). The segment covering 297-306 (TANLANQKTA) has biased composition (polar residues). The segment at 297 to 316 (TANLANQKTAQGEEASFQVT) is disordered. A coiled-coil region spans residues 337–402 (SEKYQAENDL…LKGAQNRQTS (66 aa)). Residues 447 to 467 (DKPQKHRSFHGENNSLKPTNY) form a disordered region. Over residues 457 to 467 (GENNSLKPTNY) the composition is skewed to polar residues.

It belongs to the CEP63 family.

It localises to the cytoplasm. Functionally, key structural component of the deuterosome, a structure that promotes de novo centriole amplification in multiciliated cells. Deuterosome-mediated centriole amplification occurs in terminally differentiated multiciliated cells and can generate more than 100 centrioles. Probably sufficient for the specification and formation of the deuterosome inner core. This chain is Deuterosome assembly protein 1, found in Xenopus tropicalis (Western clawed frog).